Reading from the N-terminus, the 300-residue chain is Tyrosine phosphatase-like protein J1 (300 aa).

Residues 27–294 form the Tyrosine-protein phosphatase domain; sequence LKREHEHIMQ…IFCYFTVLQF (268 aa).

This sequence belongs to the protein-tyrosine phosphatase family.

This is Tyrosine phosphatase-like protein J1 (J1) from Microplitis demolitor (Parasitoid wasp).